The sequence spans 129 residues: Small ribosomal subunit protein uS11 (129 aa).

The protein belongs to the universal ribosomal protein uS11 family. As to quaternary structure, part of the 30S ribosomal subunit. Interacts with proteins S7 and S18. Binds to IF-3.

Its function is as follows. Located on the platform of the 30S subunit, it bridges several disparate RNA helices of the 16S rRNA. Forms part of the Shine-Dalgarno cleft in the 70S ribosome. The protein is Small ribosomal subunit protein uS11 of Thermosipho africanus (strain TCF52B).